The primary structure comprises 442 residues: NAD(P)H sulfur oxidoreductase (CoA-dependent) (442 aa).

13–14 is a binding site for FAD; sequence AA. Arg-24 is a binding site for CoA. FAD-binding positions include 35 to 36 and 42 to 44; these read EA and HAP. CoA is bound by residues 41–45, 62–63, and Arg-72; these read SHAPC and HY. The Redox-active role is filled by Cys-45. Positions 82, 280, and 298 each coordinate FAD. Residues Asn-302 and Lys-358 each coordinate CoA. Tyr-422 is a binding site for FAD. CoA-binding residues include Trp-430 and Arg-438.

The protein belongs to the class-III pyridine nucleotide-disulfide oxidoreductase family. As to quaternary structure, homodimer. FAD serves as cofactor.

The protein resides in the cytoplasm. The enzyme catalyses hydrogen sulfide + NADP(+) = sulfur + NADPH. It catalyses the reaction hydrogen sulfide + NAD(+) = sulfur + NADH. It carries out the reaction NADP(+) + 2 CoA = CoA-disulfide + NADPH + H(+). The catalysed reaction is NAD(+) + 2 CoA = CoA-disulfide + NADH + H(+). In terms of biological role, catalyzes the CoA-dependent reduction of elemental sulfur (S(0)) to produce hydrogen sulfide. Can use both NADPH and NADH, but shows a preference for NADPH. May enable S(0) to be used, via sulfide, for iron-sulfur cluster synthesis by SipA. Also shows coenzyme A disulfide reductase (CoADR) activity with both NADH and NADPH. However, CoADR specific activity is about 20-fold lower than the sulfur reduction assay and CoADR activity appears to be an artifactual side reaction and is not thought to have any physiological relevance. Also shows NAD(P)H oxidase activity with both NADH and NADPH. This chain is NAD(P)H sulfur oxidoreductase (CoA-dependent), found in Pyrococcus furiosus (strain ATCC 43587 / DSM 3638 / JCM 8422 / Vc1).